A 209-amino-acid chain; its full sequence is Claudin-like protein ZF-A9 (209 aa).

4 helical membrane passes run L8–L28, A81–G101, A114–P134, and F159–L179. Residues G187–V209 are disordered. Over residues R188–N201 the composition is skewed to polar residues.

The protein belongs to the claudin family.

The protein resides in the cell membrane. It is found in the cell junction. It localises to the tight junction. Functionally, component of tight junction (TJ) strands. This is Claudin-like protein ZF-A9 (cldng) from Danio rerio (Zebrafish).